We begin with the raw amino-acid sequence, 533 residues long: Beta-glucosidase 24 (533 aa).

Positions 1–26 (MVLQKLPLMSIGLLWLLIIVGPLVNA) are cleaved as a signal peptide. Glutamine 58 contacts a beta-D-glucoside. 2 N-linked (GlcNAc...) asparagine glycosylation sites follow: asparagine 64 and asparagine 88. Residues histidine 161 and 206-207 (NE) each bind a beta-D-glucoside. Glutamate 207 (proton donor) is an active-site residue. A disulfide bridge connects residues cysteine 226 and cysteine 239. Tyrosine 355 contacts a beta-D-glucoside. Asparagine 388 carries an N-linked (GlcNAc...) asparagine glycan. An a beta-D-glucoside-binding site is contributed by glutamate 427. Catalysis depends on glutamate 427, which acts as the Nucleophile. Residues asparagine 437, asparagine 442, and asparagine 470 are each glycosylated (N-linked (GlcNAc...) asparagine). Residues tryptophan 477, 484–485 (EW), and phenylalanine 493 each bind a beta-D-glucoside. A glycan (N-linked (GlcNAc...) asparagine) is linked at asparagine 503. A Prevents secretion from ER motif is present at residues 530–533 (KDEL).

This sequence belongs to the glycosyl hydrolase 1 family.

It is found in the endoplasmic reticulum lumen. It catalyses the reaction Hydrolysis of terminal, non-reducing beta-D-glucosyl residues with release of beta-D-glucose.. The polypeptide is Beta-glucosidase 24 (Arabidopsis thaliana (Mouse-ear cress)).